Reading from the N-terminus, the 309-residue chain is Bifunctional methylenetetrahydrofolate dehydrogenase/cyclohydrolase, mitochondrial (309 aa).

Belongs to the tetrahydrofolate dehydrogenase/cyclohydrolase family. As to quaternary structure, homodimer. Mg(2+) serves as cofactor.

The protein localises to the mitochondrion. It carries out the reaction (6R)-5,10-methylene-5,6,7,8-tetrahydrofolate + NAD(+) = (6R)-5,10-methenyltetrahydrofolate + NADH. The enzyme catalyses (6R)-5,10-methenyltetrahydrofolate + H2O = (6R)-10-formyltetrahydrofolate + H(+). In terms of biological role, may play a role in spermatogenesis. This is Bifunctional methylenetetrahydrofolate dehydrogenase/cyclohydrolase, mitochondrial (Nmdmc) from Drosophila melanogaster (Fruit fly).